The primary structure comprises 140 residues: 3-hydroxyacyl-[acyl-carrier-protein] dehydratase FabZ (140 aa).

H48 is a catalytic residue.

This sequence belongs to the thioester dehydratase family. FabZ subfamily.

The protein resides in the cytoplasm. The enzyme catalyses a (3R)-hydroxyacyl-[ACP] = a (2E)-enoyl-[ACP] + H2O. Involved in unsaturated fatty acids biosynthesis. Catalyzes the dehydration of short chain beta-hydroxyacyl-ACPs and long chain saturated and unsaturated beta-hydroxyacyl-ACPs. The chain is 3-hydroxyacyl-[acyl-carrier-protein] dehydratase FabZ from Oceanobacillus iheyensis (strain DSM 14371 / CIP 107618 / JCM 11309 / KCTC 3954 / HTE831).